The primary structure comprises 450 residues: Ribosomal protein uS12 methylthiotransferase RimO (450 aa).

One can recognise an MTTase N-terminal domain in the interval 7–123 (QKVSMVSLGC…IAEILAEKSG (117 aa)). Positions 16, 52, 86, 161, 165, and 168 each coordinate [4Fe-4S] cluster. Residues 147–377 (SSPAWFSYLK…MRIQARLSFK (231 aa)) enclose the Radical SAM core domain. The region spanning 380-448 (RELIGTTEQV…DYDLIGEIQE (69 aa)) is the TRAM domain.

Belongs to the methylthiotransferase family. RimO subfamily. [4Fe-4S] cluster serves as cofactor.

Its subcellular location is the cytoplasm. It carries out the reaction L-aspartate(89)-[ribosomal protein uS12]-hydrogen + (sulfur carrier)-SH + AH2 + 2 S-adenosyl-L-methionine = 3-methylsulfanyl-L-aspartate(89)-[ribosomal protein uS12]-hydrogen + (sulfur carrier)-H + 5'-deoxyadenosine + L-methionine + A + S-adenosyl-L-homocysteine + 2 H(+). In terms of biological role, catalyzes the methylthiolation of an aspartic acid residue of ribosomal protein uS12. This is Ribosomal protein uS12 methylthiotransferase RimO from Pelobacter propionicus (strain DSM 2379 / NBRC 103807 / OttBd1).